The chain runs to 212 residues: ATP phosphoribosyltransferase (212 aa).

This sequence belongs to the ATP phosphoribosyltransferase family. Short subfamily. In terms of assembly, heteromultimer composed of HisG and HisZ subunits.

It is found in the cytoplasm. It catalyses the reaction 1-(5-phospho-beta-D-ribosyl)-ATP + diphosphate = 5-phospho-alpha-D-ribose 1-diphosphate + ATP. The protein operates within amino-acid biosynthesis; L-histidine biosynthesis; L-histidine from 5-phospho-alpha-D-ribose 1-diphosphate: step 1/9. Its function is as follows. Catalyzes the condensation of ATP and 5-phosphoribose 1-diphosphate to form N'-(5'-phosphoribosyl)-ATP (PR-ATP). Has a crucial role in the pathway because the rate of histidine biosynthesis seems to be controlled primarily by regulation of HisG enzymatic activity. In Prochlorococcus marinus (strain MIT 9312), this protein is ATP phosphoribosyltransferase.